We begin with the raw amino-acid sequence, 158 residues long: Ribosomal RNA large subunit methyltransferase H (158 aa).

S-adenosyl-L-methionine-binding positions include leucine 72, glycine 103, and 122–127 (LGNLTL).

The protein belongs to the RNA methyltransferase RlmH family. As to quaternary structure, homodimer.

The protein localises to the cytoplasm. The catalysed reaction is pseudouridine(1915) in 23S rRNA + S-adenosyl-L-methionine = N(3)-methylpseudouridine(1915) in 23S rRNA + S-adenosyl-L-homocysteine + H(+). Functionally, specifically methylates the pseudouridine at position 1915 (m3Psi1915) in 23S rRNA. The protein is Ribosomal RNA large subunit methyltransferase H of Acidiphilium cryptum (strain JF-5).